The sequence spans 96 residues: Large ribosomal subunit protein uL23 (96 aa).

This sequence belongs to the universal ribosomal protein uL23 family. Part of the 50S ribosomal subunit. Contacts protein L29, and trigger factor when it is bound to the ribosome.

Its function is as follows. One of the early assembly proteins it binds 23S rRNA. One of the proteins that surrounds the polypeptide exit tunnel on the outside of the ribosome. Forms the main docking site for trigger factor binding to the ribosome. The sequence is that of Large ribosomal subunit protein uL23 from Endomicrobium trichonymphae.